The primary structure comprises 472 residues: Adenosylhomocysteinase (472 aa).

The substrate site is built by Thr-61, Asp-139, and Glu-198. 199-201 (TTT) contacts NAD(+). Positions 228 and 232 each coordinate substrate. NAD(+) contacts are provided by residues Asn-233, 262 to 267 (GFGDVG), Glu-285, Asn-320, 341 to 343 (IGH), and Asn-386.

It belongs to the adenosylhomocysteinase family. Requires NAD(+) as cofactor.

Its subcellular location is the cytoplasm. It catalyses the reaction S-adenosyl-L-homocysteine + H2O = L-homocysteine + adenosine. The protein operates within amino-acid biosynthesis; L-homocysteine biosynthesis; L-homocysteine from S-adenosyl-L-homocysteine: step 1/1. In terms of biological role, may play a key role in the regulation of the intracellular concentration of adenosylhomocysteine. The polypeptide is Adenosylhomocysteinase (Sphingopyxis alaskensis (strain DSM 13593 / LMG 18877 / RB2256) (Sphingomonas alaskensis)).